The primary structure comprises 347 residues: Spermatogenesis associated 6-like protein (347 aa).

Residues 115-199 are disordered; the sequence is SKSHGQRVQA…ENNLEHCSKK (85 aa). Over residues 116-125 the composition is skewed to polar residues; sequence KSHGQRVQAT. Positions 153–166 are enriched in basic residues; that stretch reads LHLHRPTQRNHGKS. The span at 170–183 shows a compositional bias: basic and acidic residues; the sequence is PGERKPPFVVRHVD. Residues Ser218 and Ser221 each carry the phosphoserine modification. The interval 234-285 is disordered; the sequence is ERIVLKSQPPPPVDSSESRKPSLSHQGDASLHTETSVTTSQLSRPPSPLNQP. Residues 254–277 show a composition bias toward polar residues; sequence PSLSHQGDASLHTETSVTTSQLSR.

This sequence belongs to the SPATA6 family.

This chain is Spermatogenesis associated 6-like protein (Spata6l), found in Mus musculus (Mouse).